The following is a 146-amino-acid chain: Large ribosomal subunit protein uL15 (146 aa).

The span at 1 to 13 shows a compositional bias: basic and acidic residues; the sequence is MKLHELKPAEGSR. A disordered region spans residues 1 to 51; the sequence is MKLHELKPAEGSRKVRNRVGRGTSSGNGKTSGRGQKGQKARSGGGVRLGFE. Gly residues-rich tracts occupy residues 23–35 and 42–51; these read TSSG…GRGQ and SGGGVRLGFE.

This sequence belongs to the universal ribosomal protein uL15 family. As to quaternary structure, part of the 50S ribosomal subunit.

Binds to the 23S rRNA. The chain is Large ribosomal subunit protein uL15 from Streptococcus pneumoniae serotype 2 (strain D39 / NCTC 7466).